The sequence spans 232 residues: Enolase-phosphatase E1 (232 aa).

The protein belongs to the HAD-like hydrolase superfamily. MasA/MtnC family. As to quaternary structure, monomer. It depends on Mg(2+) as a cofactor.

The enzyme catalyses 5-methylsulfanyl-2,3-dioxopentyl phosphate + H2O = 1,2-dihydroxy-5-(methylsulfanyl)pent-1-en-3-one + phosphate. It functions in the pathway amino-acid biosynthesis; L-methionine biosynthesis via salvage pathway; L-methionine from S-methyl-5-thio-alpha-D-ribose 1-phosphate: step 3/6. The protein operates within amino-acid biosynthesis; L-methionine biosynthesis via salvage pathway; L-methionine from S-methyl-5-thio-alpha-D-ribose 1-phosphate: step 4/6. Its function is as follows. Bifunctional enzyme that catalyzes the enolization of 2,3-diketo-5-methylthiopentyl-1-phosphate (DK-MTP-1-P) into the intermediate 2-hydroxy-3-keto-5-methylthiopentenyl-1-phosphate (HK-MTPenyl-1-P), which is then dephosphorylated to form the acireductone 1,2-dihydroxy-3-keto-5-methylthiopentene (DHK-MTPene). In Xanthomonas axonopodis pv. citri (strain 306), this protein is Enolase-phosphatase E1.